A 487-amino-acid chain; its full sequence is Zinc finger and BTB domain-containing protein 32 (487 aa).

One can recognise a BTB domain in the interval 29–87; sequence CDTLITVGGQEFPAHSLVLAGVSQQLGRRGQWALGEGISPSTFAQLLNFVYGESVELQP. Basic and acidic residues predominate over residues 113–166; the sequence is RGDRAKKPDPGLKKHQEEPEKPSRNAERELGDPGEKQKPEQVSRTGGREQEMLH. 2 disordered regions span residues 113–208 and 308–371; these read RGDR…ADGK and QNQL…ARSR. The segment covering 308 to 320 has biased composition (polar residues); that stretch reads QNQLASSSPTPGS. The span at 357–369 shows a compositional bias: pro residues; that stretch reads PPRPHPPPAPPAR. C2H2-type zinc fingers lie at residues 373–395, 401–423, and 428–450; these read YACS…YRVH, FSCS…LRTH, and YRXX…MRGH. The segment at 468–487 is disordered; the sequence is SSSRPSRPSTSPCCPSSSTT.

This sequence belongs to the krueppel C2H2-type zinc-finger protein family. In terms of assembly, homodimer (via PTB domain). Interacts with the N-terminal of FANCC. Interacts with ZBTB16. Interacts with GATA3.

The protein localises to the nucleus. Functionally, DNA-binding protein that binds to the to a 5'-TGTACAGTGT-3' core sequence. May function as a transcriptional transactivator and transcriptional repressor. Probably exerts its repressor effect by preventing GATA3 from binding to DNA. May play a role in regulating the differentiation and activation of helper T-cells. In Pan troglodytes (Chimpanzee), this protein is Zinc finger and BTB domain-containing protein 32 (ZBTB32).